Consider the following 399-residue polypeptide: Elongation factor Tu (399 aa).

One can recognise a tr-type G domain in the interval 10–209 (KPHVNIGTIG…AVDDYIPTPV (200 aa)). Positions 19–26 (GHVDHGKT) are G1. GTP is bound at residue 19–26 (GHVDHGKT). Threonine 26 contacts Mg(2+). The G2 stretch occupies residues 62-66 (GITIN). Positions 83-86 (DCPG) are G3. GTP contacts are provided by residues 83–87 (DCPGH) and 138–141 (NKCD). The segment at 138 to 141 (NKCD) is G4. The tract at residues 175–177 (SAY) is G5.

The protein belongs to the TRAFAC class translation factor GTPase superfamily. Classic translation factor GTPase family. EF-Tu/EF-1A subfamily. In terms of assembly, monomer.

The protein localises to the cytoplasm. It catalyses the reaction GTP + H2O = GDP + phosphate + H(+). Its function is as follows. GTP hydrolase that promotes the GTP-dependent binding of aminoacyl-tRNA to the A-site of ribosomes during protein biosynthesis. This is Elongation factor Tu from Bifidobacterium longum subsp. infantis (strain ATCC 15697 / DSM 20088 / JCM 1222 / NCTC 11817 / S12).